The sequence spans 95 residues: Aspartyl/glutamyl-tRNA(Asn/Gln) amidotransferase subunit C (95 aa).

Belongs to the GatC family. Heterotrimer of A, B and C subunits.

It carries out the reaction L-glutamyl-tRNA(Gln) + L-glutamine + ATP + H2O = L-glutaminyl-tRNA(Gln) + L-glutamate + ADP + phosphate + H(+). The catalysed reaction is L-aspartyl-tRNA(Asn) + L-glutamine + ATP + H2O = L-asparaginyl-tRNA(Asn) + L-glutamate + ADP + phosphate + 2 H(+). In terms of biological role, allows the formation of correctly charged Asn-tRNA(Asn) or Gln-tRNA(Gln) through the transamidation of misacylated Asp-tRNA(Asn) or Glu-tRNA(Gln) in organisms which lack either or both of asparaginyl-tRNA or glutaminyl-tRNA synthetases. The reaction takes place in the presence of glutamine and ATP through an activated phospho-Asp-tRNA(Asn) or phospho-Glu-tRNA(Gln). This Nitrosococcus oceani (strain ATCC 19707 / BCRC 17464 / JCM 30415 / NCIMB 11848 / C-107) protein is Aspartyl/glutamyl-tRNA(Asn/Gln) amidotransferase subunit C.